The following is a 99-amino-acid chain: Integration host factor subunit beta (99 aa).

The protein belongs to the bacterial histone-like protein family. As to quaternary structure, heterodimer of an alpha and a beta chain.

This protein is one of the two subunits of integration host factor, a specific DNA-binding protein that functions in genetic recombination as well as in transcriptional and translational control. The sequence is that of Integration host factor subunit beta from Rhizobium etli (strain CIAT 652).